The chain runs to 434 residues: MLKRLCTILAASALAAPLALGIARANGTEELTPYKMIRSLQYVQDSVVLGDHSAIEMQRFMLGAIDERLRAADHSAFRDPRNVDAALVYVMSGGNPATLDLLADRDIEGNFDSRVTDALRQYLNGKGPLIVENLTKAAPEYKNSRIGPYLFLILGNAMSQQDPIEAMKHYDWARLTAPGTIIEEAALRRSVSLAAQAGLPEKGFRYALNYARRYLTSPFASQFADVFVELAVAHFDEAADGRVSEILSFMDSARQREVYLRVARRAAIAGNQALARLASRRAEELAGDDSSRSQVLASFYEGLAAVPSADVFSAAEALEAIPDEKLSPRDRALREAAKAVADAVVRPPLGESPAQAPAPIAERPAGEQSELAAEESGSGMSPFGQPVEASPGRPSEMTAEADVAASDDPALDGFLASGRSKIDEIDALLKGEGQ.

A signal peptide spans 1 to 15 (MLKRLCTILAASALA). The interval 344 to 417 (VVRPPLGESP…DPALDGFLAS (74 aa)) is disordered.

The protein resides in the periplasm. In terms of biological role, required for the rotation of the flagellar motor. Might control the energy flux or coupling that drives flagellar rotation. The sequence is that of Chemotaxis protein MotC (motC) from Rhizobium meliloti (strain 1021) (Ensifer meliloti).